A 634-amino-acid chain; its full sequence is Ankyrin repeat and SOCS box protein 2 (634 aa).

In terms of domain architecture, UIM spans 26–45 (SEEELVQMAIEQSLADKTRG). Residues 35–81 (IEQSLADKTRGPTPAETSVSSQTNHQPGHIHPWTRSSSPPESPPARA) are disordered. Polar residues predominate over residues 49–60 (AETSVSSQTNHQ). 12 ANK repeats span residues 104 to 133 (AAMDPVLKAIKEGDEEALKAMIQDGKNLAE), 137 to 167 (EGWLPLHEAAYYGKLGCLKVLQRAYPGTIDQ), 171 to 200 (QEETALYLATCREHLDCLLSLLQAGAEPDI), 204 to 233 (SRETPLYKACERKNAEAVRILVQYNADANH), 237 to 266 (RGWTALHESVSRNDLEVMEILVSGGAKVEA), 270 to 299 (YSITPLFVAAQSGQLEALRFLAKHGADINT), 303 to 332 (DSASALYEACKNEHEDVVEFLLSQGADANK), 336 to 365 (DGLLPLHVASKKGNYRIVQMLLPVTSRTRV), 368 to 397 (SGISPLHLAAERNHDAVLEALLAARFDVNT), 410 to 439 (RRTSALYFAVVNNNVYATELLLLAGADPNR), 440 to 469 (DVISPLLVAIRHGCLRTMQLLLDHGANIDA), and 476 to 504 (TAFPATIMFAMKCLSLLKFLMDLGCDGEP). Phosphoserine is present on Ser-371. Positions 580–634 (EDWAVIKEKAEPPRPLAHLCRLRVRKAIGKYRIKLLDTLPLPGRLIRYLKYENTQ) constitute an SOCS box domain.

It belongs to the ankyrin SOCS box (ASB) family. Component of a probable ECS E3 ubiquitin-protein ligase complex which contains CUL5, either RBX1 or RNF7/RBX2, Elongin BC complex (ELOB and ELOC) and ASB2. Interacts with SKP2. Through its interaction with SKP2, likely to bridge the formation of dimeric E3-ubiquitin-protein ligase complexes composed of an ECS complex and an SCF(SKP2) complex. Interacts with JAK2; the interaction targets JAK2 for Notch-mediated proteasomal degradation. Interacts with TCF3/E2A; the interaction is mediated by SKP2 and targets TCF3 for Notch-mediated proteasomal degradation. Interacts with DES. In terms of processing, monoubiquitinated.

It is found in the cytoplasm. Its subcellular location is the cytoskeleton. It localises to the stress fiber. The protein localises to the myofibril. The protein resides in the sarcomere. It is found in the z line. Its pathway is protein modification; protein ubiquitination. Functionally, substrate-recognition component of a SCF-like ECS (Elongin-Cullin-SOCS-box protein) E3 ubiquitin-protein ligase complex which mediates the ubiquitination and subsequent proteasomal degradation of target proteins. Mediates Notch-induced ubiquitination and degradation of substrates including E2A and JAK2. Required during embryonic heart development for complete heart looping. Required for cardiomyocyte differentiation. Involved in myogenic differentiation and targets filamin FLNB for proteasomal degradation but not filamin FLNA. Also targets DES for proteasomal degradation. Acts as a negative regulator of skeletal muscle mass. The polypeptide is Ankyrin repeat and SOCS box protein 2 (Rattus norvegicus (Rat)).